Here is a 1341-residue protein sequence, read N- to C-terminus: DNA-directed RNA polymerase subunit beta (1341 aa).

Belongs to the RNA polymerase beta chain family. In terms of assembly, the RNAP catalytic core consists of 2 alpha, 1 beta, 1 beta' and 1 omega subunit. When a sigma factor is associated with the core the holoenzyme is formed, which can initiate transcription.

The catalysed reaction is RNA(n) + a ribonucleoside 5'-triphosphate = RNA(n+1) + diphosphate. Its function is as follows. DNA-dependent RNA polymerase catalyzes the transcription of DNA into RNA using the four ribonucleoside triphosphates as substrates. The chain is DNA-directed RNA polymerase subunit beta from Vibrio cholerae serotype O1 (strain ATCC 39541 / Classical Ogawa 395 / O395).